Consider the following 100-residue polypeptide: Urease subunit gamma (100 aa).

The protein belongs to the urease gamma subunit family. As to quaternary structure, heterotrimer of UreA (gamma), UreB (beta) and UreC (alpha) subunits. Three heterotrimers associate to form the active enzyme.

It is found in the cytoplasm. The enzyme catalyses urea + 2 H2O + H(+) = hydrogencarbonate + 2 NH4(+). It participates in nitrogen metabolism; urea degradation; CO(2) and NH(3) from urea (urease route): step 1/1. This is Urease subunit gamma from Tolumonas auensis (strain DSM 9187 / NBRC 110442 / TA 4).